Reading from the N-terminus, the 348-residue chain is (+)-germacrene D synthase (348 aa).

Positions 97, 101, 242, and 246 each coordinate Mg(2+). The DDXXD motif motif lies at 97–101; it reads DDILD.

Belongs to the terpene synthase family. Requires Mg(2+) as cofactor.

The enzyme catalyses (2E,6E)-farnesyl diphosphate = (+)-germacrene D + diphosphate. It functions in the pathway secondary metabolite biosynthesis; terpenoid biosynthesis. Functionally, sesquiterpene synthase converting farnesyl diphosphate to eight sesquiterpenes, with (+)-germacrene D and an unidentified oxygenated sesquiterpene as the major products. Has no diterpene synthase activity. The protein is (+)-germacrene D synthase of Selaginella moellendorffii (Spikemoss).